Consider the following 67-residue polypeptide: DNA gyrase inhibitor YacG (67 aa).

Positions 10, 13, 29, and 33 each coordinate Zn(2+). Residues 44–57 (EEKRIPSSGDRSDT) show a composition bias toward basic and acidic residues. A disordered region spans residues 44 to 67 (EEKRIPSSGDRSDTDGWSEEENQP).

Belongs to the DNA gyrase inhibitor YacG family. Interacts with GyrB. Zn(2+) serves as cofactor.

Functionally, inhibits all the catalytic activities of DNA gyrase by preventing its interaction with DNA. Acts by binding directly to the C-terminal domain of GyrB, which probably disrupts DNA binding by the gyrase. This is DNA gyrase inhibitor YacG from Cronobacter sakazakii (strain ATCC BAA-894) (Enterobacter sakazakii).